The chain runs to 327 residues: Lipoyl synthase (327 aa).

Residues C75, C80, C86, C101, C105, C108, and S315 each coordinate [4Fe-4S] cluster. The Radical SAM core domain occupies 87–304; sequence FGNGTATFMI…EEEAYKMGFS (218 aa).

The protein belongs to the radical SAM superfamily. Lipoyl synthase family. [4Fe-4S] cluster serves as cofactor.

Its subcellular location is the cytoplasm. The enzyme catalyses [[Fe-S] cluster scaffold protein carrying a second [4Fe-4S](2+) cluster] + N(6)-octanoyl-L-lysyl-[protein] + 2 oxidized [2Fe-2S]-[ferredoxin] + 2 S-adenosyl-L-methionine + 4 H(+) = [[Fe-S] cluster scaffold protein] + N(6)-[(R)-dihydrolipoyl]-L-lysyl-[protein] + 4 Fe(3+) + 2 hydrogen sulfide + 2 5'-deoxyadenosine + 2 L-methionine + 2 reduced [2Fe-2S]-[ferredoxin]. The protein operates within protein modification; protein lipoylation via endogenous pathway; protein N(6)-(lipoyl)lysine from octanoyl-[acyl-carrier-protein]: step 2/2. Functionally, catalyzes the radical-mediated insertion of two sulfur atoms into the C-6 and C-8 positions of the octanoyl moiety bound to the lipoyl domains of lipoate-dependent enzymes, thereby converting the octanoylated domains into lipoylated derivatives. In Variovorax paradoxus (strain S110), this protein is Lipoyl synthase.